A 350-amino-acid polypeptide reads, in one-letter code: 2,5-dihydroxypyridine 5,6-dioxygenase (350 aa).

His265, His318, and Asp320 together coordinate Fe cation.

Requires Fe(2+) as cofactor.

It catalyses the reaction 2,5-dihydroxypyridine + O2 = N-formylmaleamate + H(+). It participates in cofactor degradation; nicotinate degradation. Its function is as follows. Catalyzes the dioxygenolytic ring cleavage of 2,5-dihydroxypyridine between carbons 5 and 6 generating N-formylmaleamate in the aerobic nicotinate degradation pathway. In Pseudomonas putida (strain ATCC 47054 / DSM 6125 / CFBP 8728 / NCIMB 11950 / KT2440), this protein is 2,5-dihydroxypyridine 5,6-dioxygenase (nicX).